Reading from the N-terminus, the 217-residue chain is Redox-sensing transcriptional repressor Rex (217 aa).

A DNA-binding region (H-T-H motif) is located at residues 17–56; the sequence is RYLRYVEDLLNHDVLRISSSELSQRMGYTASQVRQDFNNF. 91-96 serves as a coordination point for NAD(+); it reads GVGNLG.

Belongs to the transcriptional regulatory Rex family. In terms of assembly, homodimer.

It localises to the cytoplasm. In terms of biological role, modulates transcription in response to changes in cellular NADH/NAD(+) redox state. The protein is Redox-sensing transcriptional repressor Rex of Caldicellulosiruptor bescii (strain ATCC BAA-1888 / DSM 6725 / KCTC 15123 / Z-1320) (Anaerocellum thermophilum).